A 27-amino-acid chain; its full sequence is MYSYIYKALLYHGYEKFDLDIWEYFNK.

The protein resides in the mitochondrion. This is an uncharacterized protein from Emericella nidulans (Aspergillus nidulans).